Consider the following 647-residue polypeptide: 1-deoxy-D-xylulose-5-phosphate synthase (647 aa).

Thiamine diphosphate contacts are provided by residues His-88 and 129-131 (GHA). Asp-160 contributes to the Mg(2+) binding site. Residues 161–162 (GA), Asn-189, Tyr-300, and Glu-377 each bind thiamine diphosphate. Asn-189 serves as a coordination point for Mg(2+).

This sequence belongs to the transketolase family. DXPS subfamily. As to quaternary structure, homodimer. It depends on Mg(2+) as a cofactor. Thiamine diphosphate is required as a cofactor.

The enzyme catalyses D-glyceraldehyde 3-phosphate + pyruvate + H(+) = 1-deoxy-D-xylulose 5-phosphate + CO2. It participates in metabolic intermediate biosynthesis; 1-deoxy-D-xylulose 5-phosphate biosynthesis; 1-deoxy-D-xylulose 5-phosphate from D-glyceraldehyde 3-phosphate and pyruvate: step 1/1. Functionally, catalyzes the acyloin condensation reaction between C atoms 2 and 3 of pyruvate and glyceraldehyde 3-phosphate to yield 1-deoxy-D-xylulose-5-phosphate (DXP). The sequence is that of 1-deoxy-D-xylulose-5-phosphate synthase from Dehalococcoides mccartyi (strain ATCC BAA-2266 / KCTC 15142 / 195) (Dehalococcoides ethenogenes (strain 195)).